Consider the following 30-residue polypeptide: Cyclotide mela-5 (30 aa).

The segment at residues 1–30 (GSAIACGESCFKFKCYTPGCSCSYPICKKD) is a cross-link (cyclopeptide (Gly-Asp)). 3 disulfide bridges follow: C6-C20, C10-C22, and C15-C27.

Post-translationally, this is a cyclic peptide. In terms of processing, contains 3 disulfide bonds.

Functionally, probably participates in a plant defense mechanism (Potential). Binds to and induces leakage in phospholipd membranes, particularly ones containing 1-palmitoyl-2-oleophosphatidylethanolamine (POPE). The chain is Cyclotide mela-5 from Melicytus latifolius (Norfolk Island mahoe).